The following is a 102-amino-acid chain: MEITDVRLRRVETDGRMKAISSITIDGEFVIHDIRVIDGNEGLFVAMPSKRTPDGEFRDIAHPINSGTRAKIQEAVLAAYEVADEPAVNEESSADESVVEEN.

The protein belongs to the SpoVG family.

Could be involved in septation. The polypeptide is Putative septation protein SpoVG 1 (Listeria innocua serovar 6a (strain ATCC BAA-680 / CLIP 11262)).